A 361-amino-acid chain; its full sequence is uncharacterized protein (361 aa).

WD repeat units lie at residues 57–96, 103–142, 146–184, 187–229, 237–275, and 280–318; these read RHKK…VSSK, KEIS…GIIH, DHID…KPIL, EQDE…DHTD, SHDF…YERI, and SSRS…GDES. The tract at residues 311-361 is disordered; that stretch reads DQKEGDESSSSDNLDSDEDSSSDSEFSSPKKKKKVGNQGKKPLGTDFFDGL.

The protein localises to the nucleus. The protein resides in the nucleolus. This is an uncharacterized protein from Schizosaccharomyces pombe (strain 972 / ATCC 24843) (Fission yeast).